The primary structure comprises 373 residues: Glutamine synthetase (373 aa).

N-acetylalanine is present on A2. Positions 2-25 (ATSASSHLNKGIKQMYMSLPQGEK) are required for glutamine-induced ubiquitination by CRL4(CRBN) and proteasomal degradation. N6-acetyllysine occurs at positions 11 and 14. The 83-residue stretch at 24 to 106 (EKVQAMYIWV…VLCEVFKYNR (83 aa)) folds into the GS beta-grasp domain. Y104 carries the post-translational modification Phosphotyrosine. Residues 113-373 (LRHICKRIMD…TGDEPFQYKN (261 aa)) enclose the GS catalytic domain. E134 lines the ATP pocket. E134, E136, E196, and E203 together coordinate Mn(2+). 203–208 (EFQIGP) lines the ATP pocket. 246–247 (NW) lines the L-glutamate pocket. H253 contacts Mn(2+). ATP is bound by residues 255-257 (NFS), R319, and R324. R319 contacts L-glutamate. 336–338 (YFE) serves as a coordination point for ADP. Residue E338 coordinates Mn(2+). Position 340 (R340) interacts with L-glutamate. The residue at position 343 (S343) is a Phosphoserine.

Belongs to the glutamine synthetase family. In terms of assembly, decamer; composed of two pentamers. Interacts with PALMD. Interacts with RHOJ. Interacts with BEST2; this interaction tethers a fraction of GLUL to the membrane, causing a decrease of cytosolic glutamine synthase (GS) activity and inhibits the chloride channel activity of BEST2 by affecting the gating at the aperture in the absence of intracellular glutamate. Mg(2+) serves as cofactor. Requires Mn(2+) as cofactor. Acetylated by EP300/p300; acetylation is stimulated by increased glutamine levels and promotes ubiquitin-mediated proteasomal degradation. In terms of processing, palmitoylated; undergoes autopalmitoylation. Post-translationally, ubiquitinated by ZNRF1. Ubiquitinated by the DCX (DDB1-CUL4-X-box) E3 ubiquitin-protein ligase complex called CRL4(CRBN), leading to proteasomal degradation. In terms of tissue distribution, expressed in microvascular endothelial cells.

It is found in the cytoplasm. Its subcellular location is the cytosol. The protein localises to the microsome. The protein resides in the mitochondrion. It localises to the cell membrane. It catalyses the reaction L-glutamate + NH4(+) + ATP = L-glutamine + ADP + phosphate + H(+). The enzyme catalyses L-cysteinyl-[protein] + hexadecanoyl-CoA = S-hexadecanoyl-L-cysteinyl-[protein] + CoA. Its activity is regulated as follows. Glutamine synthetase activity is inhibited by methionine sulfoximine (MSO). In terms of biological role, glutamine synthetase that catalyzes the ATP-dependent conversion of glutamate and ammonia to glutamine. Its role depends on tissue localization: in the brain, it regulates the levels of toxic ammonia and converts neurotoxic glutamate to harmless glutamine, whereas in the liver, it is one of the enzymes responsible for the removal of ammonia. Plays a key role in ammonium detoxification during erythropoiesis: the glutamine synthetase activity is required to remove ammonium generated by porphobilinogen deaminase (HMBS) during heme biosynthesis to prevent ammonium accumulation and oxidative stress. Essential for proliferation of fetal skin fibroblasts. Independently of its glutamine synthetase activity, required for endothelial cell migration during vascular development. Involved in angiogenesis by regulating membrane localization and activation of the GTPase RHOJ, possibly by promoting RHOJ palmitoylation. May act as a palmitoyltransferase for RHOJ: able to autopalmitoylate and then transfer the palmitoyl group to RHOJ. Plays a role in ribosomal 40S subunit biogenesis. Through the interaction with BEST2, inhibits BEST2 channel activity by affecting the gating at the aperture in the absence of intracellular L-glutamate, but sensitizes BEST2 to intracellular L-glutamate, which promotes the opening of BEST2 and thus relieves its inhibitory effect on BEST2. The polypeptide is Glutamine synthetase (Mus musculus (Mouse)).